The following is a 396-amino-acid chain: MKILVLNSGSSSIKFKFFDNKIIKASGLVEKIGEQNSKVILKNVLNNESFERELTINNHEEGLSIVNELFKESGILADLNTLDGCGHRIVHGGRNLSEHCLVDDYVLKEIDRVSIFAPLHNPAHLAGIKTMIKAAPSVANVAIFDTAFHRTMPDFAYMYALPYDFYDKHNIRRYGFHGTSHAFVSSRAASLLEKDKSELNVISAHLGNGASVCAIEKGKSVDTSMGFTPLEGLVMGTRCGDLDPAILPFISHLKGLTIEEIDTLMNKKSGVYGICGYNDFRDIEREIEQGNDKARLALDMFCYRLVKYIGAYFAVLPKTDAIVFTGGIGENDSLVRQKVCERLAHLGIELDFELNKQRISGERMINHANSKVKVLVIPTDEELEIARITEELIGKN.

Mg(2+) is bound at residue Asn7. ATP is bound at residue Lys14. Position 88 (Arg88) interacts with substrate. Asp145 (proton donor/acceptor) is an active-site residue. ATP is bound by residues 205-209 (HLGNG), 279-281 (DFR), and 327-331 (GIGEN). Glu381 provides a ligand contact to Mg(2+).

It belongs to the acetokinase family. In terms of assembly, homodimer. The cofactor is Mg(2+). Mn(2+) serves as cofactor.

Its subcellular location is the cytoplasm. The catalysed reaction is acetate + ATP = acetyl phosphate + ADP. Its pathway is metabolic intermediate biosynthesis; acetyl-CoA biosynthesis; acetyl-CoA from acetate: step 1/2. Its function is as follows. Catalyzes the formation of acetyl phosphate from acetate and ATP. Can also catalyze the reverse reaction. The sequence is that of Acetate kinase from Campylobacter jejuni subsp. doylei (strain ATCC BAA-1458 / RM4099 / 269.97).